Consider the following 141-residue polypeptide: ATP synthase epsilon chain (141 aa).

This sequence belongs to the ATPase epsilon chain family. In terms of assembly, F-type ATPases have 2 components, CF(1) - the catalytic core - and CF(0) - the membrane proton channel. CF(1) has five subunits: alpha(3), beta(3), gamma(1), delta(1), epsilon(1). CF(0) has three main subunits: a, b and c.

The protein localises to the cell membrane. Its function is as follows. Produces ATP from ADP in the presence of a proton gradient across the membrane. This chain is ATP synthase epsilon chain, found in Natranaerobius thermophilus (strain ATCC BAA-1301 / DSM 18059 / JW/NM-WN-LF).